The following is a 515-amino-acid chain: MCAVTVVPDPTCCGTLSFKVPKDAKKGKHLGTFDIRQAIMDYGGLHSQEWCAKGIVNPTFTVRMHAPRNAFAGLSIACTFDDYKRIDLPALGNECPPSEMFELPTKVFMLKDADVHEWQFNYGELTGHGLCNWANVATQPTLYFFVASTNQVTMAADWQCIVTMHVDMGPVIDRFELNPTMTWPIQLGDTFAIDRYYEAKEIKLDGSTSMLSISYNFGGPVKHSKKHAISYSRAVMSRNLGWSGTISGSVKSVSSLFCTASFVIFPWECEAPPTLRQVLWGPHQIMHGDGQFEIAIKTRLHSAATTEEGFGRLGILPLSGPIAPDAHVGSYEFIVHINTWRPDSQVHPPMFSSSELYNWFTLTNLKPDANTGVVNFDIPGYIHDFASKDATVTLASNPLSWLVAATGWHYGEVDLCISWSRSKQAQAQEGSVSITTNYRDWGAYWQGQARIYDLRRTEAEIPIFLGSYAGATPSGALGKQNYVRISIVNAKDIVALRVCLRPKSIKFWGRSATLF.

The propeptide occupies 1–2 (MC).

The virus coat is formed of 60 copies of the coat protein.

Its subcellular location is the virion. The sequence is that of Capsid protein from Tobacco ringspot virus (TobRV).